The following is a 337-amino-acid chain: ELAV-like protein 1-A (337 aa).

RRM domains follow at residues 20–109 (TNLI…FARP), 117–197 (ANLY…FAAN), and 255–333 (WCIF…FKTS).

Belongs to the RRM elav family. Interacts (via RRM3) with cirbp. Unable to form oligomers. Part of a ribonucleoprotein (RNP) complex, at least composed of elavl1/elrA and/or elavl2/elrB, igf2bp3/vg1RBP, ddx6/Xp54, ybx2/frgy2, lsm14b/rap55b and, in a subset of RNP complexes, stau1/staufen. In terms of tissue distribution, ubiquitously expressed in adults.

The protein localises to the cytoplasm. Its subcellular location is the cell cortex. Functionally, RNA-binding protein that binds to the 3'-UTR region of mRNAs and increases their stability. Involved in embryonic stem cells (ESCs) differentiation: preferentially binds mRNAs that are not methylated by N6-methyladenosine (m6A), stabilizing them, promoting ESCs differentiation. Binds to poly-U elements and AU-rich elements (AREs) in the 3'-UTR of target mRNAs. May be involved in cytoplasmic mRNA polyadenylation. Acts cooperatively with cribp to stabilize AU-rich sequence (ARE)-containing mRNAs. May play a role during gastrulation. Required for the vegetal localization of vg1 mRNA. The sequence is that of ELAV-like protein 1-A (elavl1-a) from Xenopus laevis (African clawed frog).